Consider the following 279-residue polypeptide: NADPH-dependent 7-cyano-7-deazaguanine reductase (279 aa).

A substrate-binding site is contributed by 86–88; the sequence is IES. Position 88–89 (88–89) interacts with NADPH; sequence SK. Cys187 functions as the Thioimide intermediate in the catalytic mechanism. Catalysis depends on Asp194, which acts as the Proton donor. 226–227 serves as a coordination point for substrate; sequence HE. 255-256 is a binding site for NADPH; that stretch reads RG.

It belongs to the GTP cyclohydrolase I family. QueF type 2 subfamily. In terms of assembly, homodimer.

It is found in the cytoplasm. It catalyses the reaction 7-aminomethyl-7-carbaguanine + 2 NADP(+) = 7-cyano-7-deazaguanine + 2 NADPH + 3 H(+). It functions in the pathway tRNA modification; tRNA-queuosine biosynthesis. In terms of biological role, catalyzes the NADPH-dependent reduction of 7-cyano-7-deazaguanine (preQ0) to 7-aminomethyl-7-deazaguanine (preQ1). The sequence is that of NADPH-dependent 7-cyano-7-deazaguanine reductase from Haemophilus influenzae (strain PittEE).